The primary structure comprises 301 residues: N-carbamoylputrescine amidase (301 aa).

Positions 11–269 (VSVAAVQFAC…EDVLVAEFDL (259 aa)) constitute a CN hydrolase domain. E50 (proton acceptor) is an active-site residue. K123 acts as the Proton donor in catalysis. The Nucleophile role is filled by C160.

Belongs to the carbon-nitrogen hydrolase superfamily. As to quaternary structure, homooctamer.

The enzyme catalyses N-carbamoylputrescine + H2O + 2 H(+) = putrescine + NH4(+) + CO2. The protein operates within amine and polyamine biosynthesis; putrescine biosynthesis via agmatine pathway; putrescine from N-carbamoylputrescine (amidase route): step 1/1. Functionally, involved in polyamine biosynthesis. The protein is N-carbamoylputrescine amidase (CPA) of Oryza sativa subsp. japonica (Rice).